Consider the following 156-residue polypeptide: SsrA-binding protein (156 aa).

This sequence belongs to the SmpB family.

It localises to the cytoplasm. Its function is as follows. Required for rescue of stalled ribosomes mediated by trans-translation. Binds to transfer-messenger RNA (tmRNA), required for stable association of tmRNA with ribosomes. tmRNA and SmpB together mimic tRNA shape, replacing the anticodon stem-loop with SmpB. tmRNA is encoded by the ssrA gene; the 2 termini fold to resemble tRNA(Ala) and it encodes a 'tag peptide', a short internal open reading frame. During trans-translation Ala-aminoacylated tmRNA acts like a tRNA, entering the A-site of stalled ribosomes, displacing the stalled mRNA. The ribosome then switches to translate the ORF on the tmRNA; the nascent peptide is terminated with the 'tag peptide' encoded by the tmRNA and targeted for degradation. The ribosome is freed to recommence translation, which seems to be the essential function of trans-translation. The sequence is that of SsrA-binding protein from Clostridium tetani (strain Massachusetts / E88).